Reading from the N-terminus, the 1043-residue chain is Protein translocase subunit SecA (1043 aa).

ATP-binding positions include Q143, 161-165 (GEGKT), and D665. Residues 980-1005 (ATAAPAAETTTTAKAADAARQQPPAA) are compositionally biased toward low complexity. The interval 980 to 1043 (ATAAPAAETT…KYKHCHGRNA (64 aa)) is disordered. Positions 1008-1022 (EEQKRQPVHVEKTPG) are enriched in basic and acidic residues. Residues C1027, C1029, C1038, and H1039 each contribute to the Zn(2+) site. The span at 1033–1043 (KKYKHCHGRNA) shows a compositional bias: basic residues.

It belongs to the SecA family. Monomer and homodimer. Part of the essential Sec protein translocation apparatus which comprises SecA, SecYEG and auxiliary proteins SecDF. Other proteins may also be involved. Zn(2+) serves as cofactor.

The protein resides in the cell inner membrane. It is found in the cytoplasm. The enzyme catalyses ATP + H2O + cellular proteinSide 1 = ADP + phosphate + cellular proteinSide 2.. In terms of biological role, part of the Sec protein translocase complex. Interacts with the SecYEG preprotein conducting channel. Has a central role in coupling the hydrolysis of ATP to the transfer of proteins into and across the cell membrane, serving as an ATP-driven molecular motor driving the stepwise translocation of polypeptide chains across the membrane. The polypeptide is Protein translocase subunit SecA (Chloroherpeton thalassium (strain ATCC 35110 / GB-78)).